Reading from the N-terminus, the 461-residue chain is MSARIRIRNALAGEGLGNEIMVKGWVRTIRTGKEVAFLALNDGSCFANLQVVAEPGLATFADVCAIGTGAAVAVRGRLVDSPASGQCYELHADEVAVIGLADESYPLQKKRHSFEYLRSIAHLRPRSNTFGAVFRVRSSVAQAVHRFFAERGFLYVHTPIITTSDCEGAGEMFRVTTLDPAAPPLLEGEVDFSRDFFAAQAGLTVSGQLEGELFAQAFSDIYTFGPTFRAENSNTPRHAAEFWMIEPEMAFADLMADAALAEEFFRYLCRHVLDACGEDMAFFNDHIDKGLIARVEQVANSSFAIMEYGEAIERLKKATVTFEYPVEWGLDLQTEHERYLTEQVVGGPVFVINYPKHIKAFYMRVNDDNKTVAAMDLLVPKVGEIIGGSQREERLPVLEGRMAEVGVNPEGLWWYLDSRRWGSTPHAGFGLGFERLIMYLTGMENIRDVIPFPRTPRHAEF.

The protein belongs to the class-II aminoacyl-tRNA synthetase family. As to quaternary structure, homodimer.

Its subcellular location is the cytoplasm. It carries out the reaction tRNA(Asn) + L-asparagine + ATP = L-asparaginyl-tRNA(Asn) + AMP + diphosphate + H(+). This Geobacter metallireducens (strain ATCC 53774 / DSM 7210 / GS-15) protein is Asparagine--tRNA ligase.